The chain runs to 354 residues: tRNA-specific 2-thiouridylase MnmA (354 aa).

ATP is bound by residues 7-14 (AMSGGVDS) and Met33. The active-site Nucleophile is Cys94. Cysteines 94 and 192 form a disulfide. Gly118 contributes to the ATP binding site. The interval 141–143 (KDQ) is interaction with tRNA. Cys192 acts as the Cysteine persulfide intermediate in catalysis. An interaction with tRNA region spans residues 296–297 (RY).

This sequence belongs to the MnmA/TRMU family.

The protein resides in the cytoplasm. The enzyme catalyses S-sulfanyl-L-cysteinyl-[protein] + uridine(34) in tRNA + AH2 + ATP = 2-thiouridine(34) in tRNA + L-cysteinyl-[protein] + A + AMP + diphosphate + H(+). Its function is as follows. Catalyzes the 2-thiolation of uridine at the wobble position (U34) of tRNA, leading to the formation of s(2)U34. In Trichlorobacter lovleyi (strain ATCC BAA-1151 / DSM 17278 / SZ) (Geobacter lovleyi), this protein is tRNA-specific 2-thiouridylase MnmA.